A 343-amino-acid polypeptide reads, in one-letter code: Endoglucanase C (343 aa).

The Proton donor role is filled by E140. The Nucleophile role is filled by E280.

Belongs to the glycosyl hydrolase 5 (cellulase A) family.

The catalysed reaction is Endohydrolysis of (1-&gt;4)-beta-D-glucosidic linkages in cellulose, lichenin and cereal beta-D-glucans.. The protein operates within glycan metabolism; cellulose degradation. This enzyme catalyzes the endohydrolysis of 1,4-beta-glucosidic linkages in cellulose, lichenin and cereal beta-D-glucans. The protein is Endoglucanase C (celC) of Acetivibrio thermocellus (Hungateiclostridium thermocellum).